The following is a 210-amino-acid chain: Na(+)-translocating NADH-quinone reductase subunit D (210 aa).

6 consecutive transmembrane segments (helical) span residues 42-62 (VVMT…ISTI), 66-86 (IPNS…VIVV), 103-123 (VYVG…AFAM), 131-151 (FMDG…VGAF), 154-174 (LFGS…NGGW), and 178-198 (NGLL…IWAV).

The protein belongs to the NqrDE/RnfAE family. In terms of assembly, composed of six subunits; NqrA, NqrB, NqrC, NqrD, NqrE and NqrF.

The protein resides in the cell inner membrane. The catalysed reaction is a ubiquinone + n Na(+)(in) + NADH + H(+) = a ubiquinol + n Na(+)(out) + NAD(+). NQR complex catalyzes the reduction of ubiquinone-1 to ubiquinol by two successive reactions, coupled with the transport of Na(+) ions from the cytoplasm to the periplasm. NqrA to NqrE are probably involved in the second step, the conversion of ubisemiquinone to ubiquinol. In Psychromonas ingrahamii (strain DSM 17664 / CCUG 51855 / 37), this protein is Na(+)-translocating NADH-quinone reductase subunit D.